Here is a 428-residue protein sequence, read N- to C-terminus: Divergent protein kinase domain 1A (428 aa).

Over 1–27 (MARGLFSRAWLSKTHHFQARLSYIRVK) the chain is Cytoplasmic. The helical transmembrane segment at 28–48 (YLFLTWLAVFVSSWVVYVQYS) threads the bilayer. Over 49–428 (TYTELCRGRE…WKQISHTTDS (380 aa)) the chain is Lumenal.

This sequence belongs to the DIPK family. Among the many cysteines in the lumenal domain, most are probably involved in disulfide bonds.

The protein localises to the endoplasmic reticulum membrane. This is Divergent protein kinase domain 1A (dipk1a) from Danio rerio (Zebrafish).